A 2110-amino-acid chain; its full sequence is Protein Ycf2 (2110 aa).

ATP is bound at residue 1336–1343 (GSIGTGRS). The tract at residues 1852–1876 (EEEAELQDEEAELQDEGAGRKDEEA) is disordered. Positions 1854 to 1866 (EAELQDEEAELQD) are enriched in acidic residues.

The protein belongs to the Ycf2 family.

It localises to the plastid. The protein localises to the chloroplast stroma. Its function is as follows. Probable ATPase of unknown function. Its presence in a non-photosynthetic plant (Epifagus virginiana) and experiments in tobacco indicate that it has an essential function which is probably not related to photosynthesis. In Pelargonium hortorum (Common geranium), this protein is Protein Ycf2 (ycf2-A).